The chain runs to 124 residues: Autophagy-related protein 8 (124 aa).

Gly116 carries the Phosphatidylethanolamine amidated glycine lipid modification. A propeptide spans 117-124 (removed in mature form); sequence GAGPLLEK.

This sequence belongs to the ATG8 family. As to quaternary structure, conjugation to phosphatidylethanolamine (PE) leads to homodimerization. Interacts with ATG1, ATG3, ATG4, ATG7 and ATG12. In terms of processing, the C-terminal 8 residues of ATG8 are removed by ATG4 to expose Gly-116 at the C-terminus. This Gly-116 forms then a thioester bond with the 'Cys-550' of ATG7 (E1-like activating enzyme) before being transferred to the 'Cys-244' of ATG3 (the specific E2 conjugating enzyme), in order to be finally amidated with phosphatidylethanolamine. This lipid modification anchors ATG8 to membranes and can be reversed by ATG4, releasing soluble ATG8.

Its subcellular location is the cytoplasmic vesicle. It is found in the cvt vesicle membrane. It localises to the autophagosome membrane. The protein resides in the vacuole membrane. Its function is as follows. Ubiquitin-like modifier involved in cytoplasm to vacuole transport (Cvt) vesicles and autophagosome formation. With ATG4, mediates the delivery of the vesicles and autophagosomes to the vacuole via the microtubule cytoskeleton. Required for selective autophagic degradation of the nucleus (nucleophagy) as well as for mitophagy which contributes to regulate mitochondrial quantity and quality by eliminating the mitochondria to a basal level to fulfill cellular energy requirements and preventing excess ROS production. Also participates in membrane fusion events that take place in the early secretory pathway. Also involved in endoplasmic reticulum-specific autophagic process and is essential for the survival of cells subjected to severe ER stress. The ATG8-PE conjugate mediates tethering between adjacent membranes and stimulates membrane hemifusion, leading to expansion of the autophagosomal membrane during autophagy. Moreover not only conjugation, but also subsequent ATG8-PE deconjugation is an important step required to facilitate multiple events during macroautophagy, and especially for efficient autophagosome biogenesis, the assembly of ATG9-containing tubulovesicular clusters into phagophores/autophagosomes, and for the disassembly of PAS-associated ATG components. The protein is Autophagy-related protein 8 of Kluyveromyces marxianus (strain DMKU3-1042 / BCC 29191 / NBRC 104275) (Yeast).